The primary structure comprises 1690 residues: Chromatin-remodeling ATPase INO80 (1690 aa).

Disordered stretches follow at residues 1 to 306 (MSGA…SERE), 395 to 527 (QAKE…AEAA), and 618 to 637 (QSRK…QARA). Polar residues-rich tracts occupy residues 30-41 (FYSNNDQYQQHP) and 111-127 (SVLS…STAS). Residues 213–227 (PAPLALAPASAARQS) show a composition bias toward low complexity. Composition is skewed to basic and acidic residues over residues 253 to 273 (RLEK…EPKM), 395 to 407 (QAKE…ERKK), 416 to 453 (ENTV…ERAQ), 513 to 524 (SKEQKQAEKDAA), and 621 to 635 (KWQE…DTQA). Residues 392 to 468 (AEVQAKEVQD…TKRALEGVTA (77 aa)) adopt a coiled-coil conformation. In terms of domain architecture, DBINO spans 581–706 (IWRDIARKDI…SHFIGRKIKG (126 aa)). The stretch at 623–694 (QERTNKSMKD…KLNFLISQTE (72 aa)) forms a coiled coil. A Helicase ATP-binding domain is found at 830–1002 (VNLYEQGING…WALLHFIMPT (173 aa)). ATP is bound at residue 843 to 850 (DEMGLGKT). Residues 953-956 (DEAQ) carry the DEAQ box motif. Residues 1403–1563 (KLDELLRELK…GVDFNTRNRE (161 aa)) form the Helicase C-terminal domain. Positions 1619–1690 (YHEGEGNFDD…IDGDGGLGPM (72 aa)) are disordered. Residues 1656-1672 (KRGRGRGTGKGTSKRAK) are compositionally biased toward basic residues. Residues 1673–1682 (TTKERLRLID) show a composition bias toward basic and acidic residues.

It belongs to the SNF2/RAD54 helicase family. In terms of assembly, component of the INO80 chromatin-remodeling complex.

Its subcellular location is the nucleus. It catalyses the reaction ATP + H2O = ADP + phosphate + H(+). In terms of biological role, ATPase component of the INO80 complex which remodels chromatin by shifting nucleosomes and is involved in DNA repair. This chain is Chromatin-remodeling ATPase INO80 (ino80), found in Aspergillus terreus (strain NIH 2624 / FGSC A1156).